The sequence spans 427 residues: Ribitol transporter (427 aa).

Over 1–7 (MSVNNKQ) the chain is Cytoplasmic. The chain crosses the membrane as a helical span at residues 8–28 (WYGLPLNLIWGYVAIAVFMTG). Residues 29-51 (DGFELAFLSHYIKALGFTPAQAS) lie on the Extracellular side of the membrane. A helical transmembrane segment spans residues 52–72 (FAFTLYGLAAALSAWVSGVVA). Over 73 to 79 (EIITPRK) the chain is Cytoplasmic. Residues 80-100 (AMLIGFVLWCVFHVLFLVFGL) traverse the membrane as a helical segment. The Extracellular segment spans residues 101 to 107 (GRANYAL). The helical transmembrane segment at 108–128 (ILLFYGIRGLAYPLFLYSFIV) threads the bilayer. At 129–141 (AIIHNVRSDSSSS) the chain is on the cytoplasmic side. A helical membrane pass occupies residues 142 to 162 (ALGWFWAVYSVGIGVFGSYIP). Topologically, residues 163–171 (SFTIPHIGE) are extracellular. A helical transmembrane segment spans residues 172 to 192 (MGTLWLALLFCATGGIIALVS). Topologically, residues 193 to 238 (MRHTETPRHMQNLTTREKFAELGRAATLLYTNRSILFSSIVRIINT) are cytoplasmic. A helical membrane pass occupies residues 239–259 (LSLFGFAVIMPMMFVDELGFT). Residues 260 to 263 (TSEW) lie on the Extracellular side of the membrane. Residues 264–284 (LQVWAAFFFTTIFSNVFWGIV) form a helical membrane-spanning segment. Over 285–295 (AEKMGWMKVIR) the chain is Cytoplasmic. Residues 296–316 (WFGCIGMALSSLAFYYLPQHF) traverse the membrane as a helical segment. Over 317–323 (GHNFAMA) the chain is Extracellular. The helical transmembrane segment at 324–344 (LVPAIALGIFVAAFVPMAAVF) threads the bilayer. Residues 345-360 (PALEPNHKGAAISVYN) are Cytoplasmic-facing. The chain crosses the membrane as a helical span at residues 361-381 (LSAGLSNFLAPAIAVVLLPYF). The Extracellular portion of the chain corresponds to 382–383 (ST). The helical transmembrane segment at 384-404 (IGVVIAYTALYILAFFLCPLI) threads the bilayer. Topologically, residues 405–427 (RVEQPGFTSDQHAKPFTANAAES) are cytoplasmic.

It belongs to the major facilitator superfamily. Sugar transporter (TC 2.A.1.1) family. CsbX subfamily.

Its subcellular location is the cell membrane. This chain is Ribitol transporter (rbtT), found in Klebsiella pneumoniae.